A 138-amino-acid chain; its full sequence is Acidic phospholipase A2 (138 aa).

The N-terminal stretch at 1-16 (MRTLWIVAVLLLGVEG) is a signal peptide. 7 cysteine pairs are disulfide-bonded: C42–C131, C44–C60, C59–C111, C65–C138, C66–C104, C73–C97, and C91–C102. The Ca(2+) site is built by Y43, G45, and G47. Residue H63 is part of the active site. D64 contacts Ca(2+). Residue D105 is part of the active site.

The protein belongs to the phospholipase A2 family. Group II subfamily. D49 sub-subfamily. As to quaternary structure, homodimer. Ca(2+) serves as cofactor. As to expression, expressed by the venom gland.

It localises to the secreted. It carries out the reaction a 1,2-diacyl-sn-glycero-3-phosphocholine + H2O = a 1-acyl-sn-glycero-3-phosphocholine + a fatty acid + H(+). Its function is as follows. PLA2 catalyzes the calcium-dependent hydrolysis of the 2-acyl groups in 3-sn-phosphoglycerides. The sequence is that of Acidic phospholipase A2 from Crotalus atrox (Western diamondback rattlesnake).